The following is a 401-amino-acid chain: Acetate kinase (401 aa).

Residue asparagine 7 participates in Mg(2+) binding. Residue lysine 14 coordinates ATP. Arginine 91 serves as a coordination point for substrate. The active-site Proton donor/acceptor is the aspartate 148. ATP contacts are provided by residues 208 to 212, 283 to 285, and 332 to 336; these read HLGNG, DFR, and GVGEN. Position 385 (glutamate 385) interacts with Mg(2+).

The protein belongs to the acetokinase family. Homodimer. Mg(2+) serves as cofactor. It depends on Mn(2+) as a cofactor.

The protein localises to the cytoplasm. The enzyme catalyses acetate + ATP = acetyl phosphate + ADP. The protein operates within metabolic intermediate biosynthesis; acetyl-CoA biosynthesis; acetyl-CoA from acetate: step 1/2. Its function is as follows. Catalyzes the formation of acetyl phosphate from acetate and ATP. Can also catalyze the reverse reaction. This is Acetate kinase from Thermoanaerobacter pseudethanolicus (strain ATCC 33223 / 39E) (Clostridium thermohydrosulfuricum).